Here is a 209-residue protein sequence, read N- to C-terminus: Na(+)-translocating NADH-quinone reductase subunit D (209 aa).

A run of 5 helical transmembrane segments spans residues 42 to 62, 66 to 86, 103 to 123, 131 to 151, and 178 to 198; these read LVMT…ISLI, IPNS…VIVV, VFVG…AYAM, FMDG…VGFV, and NGLF…IWGL.

Belongs to the NqrDE/RnfAE family. In terms of assembly, composed of six subunits; NqrA, NqrB, NqrC, NqrD, NqrE and NqrF.

It localises to the cell inner membrane. It carries out the reaction a ubiquinone + n Na(+)(in) + NADH + H(+) = a ubiquinol + n Na(+)(out) + NAD(+). Its function is as follows. NQR complex catalyzes the reduction of ubiquinone-1 to ubiquinol by two successive reactions, coupled with the transport of Na(+) ions from the cytoplasm to the periplasm. NqrA to NqrE are probably involved in the second step, the conversion of ubisemiquinone to ubiquinol. The protein is Na(+)-translocating NADH-quinone reductase subunit D of Yersinia pseudotuberculosis serotype O:1b (strain IP 31758).